The following is a 460-amino-acid chain: Chromosomal replication initiator protein DnaA (460 aa).

The interval 1–73 is domain I, interacts with DnaA modulators; the sequence is MEISIDSLWS…ANVVQSILGH (73 aa). Residues 73–116 are domain II; the sequence is HPVEIYITVAKGEEFEEIGGGGAWELPTTNSIYETPNQNRQPNT. The domain III, AAA+ region stretch occupies residues 117–333; the sequence is ELNAKYVFSR…GALTRALAYI (217 aa). ATP is bound by residues glycine 161, glycine 163, lysine 164, and threonine 165. The domain IV, binds dsDNA stretch occupies residues 334–460; sequence SIWGLPMTVA…MNSRSRKPSL (127 aa).

It belongs to the DnaA family. As to quaternary structure, oligomerizes as a right-handed, spiral filament on DNA at oriC.

Its subcellular location is the cytoplasm. Functionally, plays an essential role in the initiation and regulation of chromosomal replication. ATP-DnaA binds to the origin of replication (oriC) to initiate formation of the DNA replication initiation complex once per cell cycle. Binds the DnaA box (a 9 base pair repeat at the origin) and separates the double-stranded (ds)DNA. Forms a right-handed helical filament on oriC DNA; dsDNA binds to the exterior of the filament while single-stranded (ss)DNA is stabiized in the filament's interior. The ATP-DnaA-oriC complex binds and stabilizes one strand of the AT-rich DNA unwinding element (DUE), permitting loading of DNA polymerase. After initiation quickly degrades to an ADP-DnaA complex that is not apt for DNA replication. Binds acidic phospholipids. The sequence is that of Chromosomal replication initiator protein DnaA from Trichormus variabilis (strain ATCC 29413 / PCC 7937) (Anabaena variabilis).